The sequence spans 193 residues: Achaete-scute homolog 2 (193 aa).

Disordered stretches follow at residues 1–58 (MDSR…RNER) and 128–177 (PLPR…GALS). In terms of domain architecture, bHLH spans 50–102 (AAVARRNERERNRVKLVNLGFQALRQHVPHGGASKKLSKVETLRSAVEYIRAL). Low complexity predominate over residues 128–152 (PLPRAPSGTPATAASPSCASSSPGR).

In terms of assembly, efficient DNA binding requires dimerization with another basic helix-loop-helix (bHLH) protein. Forms heterodimers with bHLH transcription factor TCF3. May not heterodimerise with bHLH protein HAND1. In terms of tissue distribution, expressed in placenta.

The protein resides in the nucleus. Its function is as follows. Transcription factor. Binds to E-box motifs 5'-CANNTG-3' in the regulatory elements of target genes, probably as a heterodimer with another basic helix-loop-helix (bHLH) protein such as the transcription factor TCF3. May bind both open and closed chromatin, acting as a pioneer transcription factor to allow other factors to bind and activate lineage-specific genes. Required during post-implantation development for the generation of some differentiated trophoblast cell types. Transcriptional activity of ASCL2 may be antagonised in a subset of trophoblast cells by bHLH transcription factor HAND1, perhaps by competing for dimerization with other bHLH proteins. Involved in differentiation and function of follicular T-helper (Tfh) cells, thereby playing a role in germinal center responses; probably modulates expression of genes involved in Tfh cell function, such as BCL6. May also act as a suppressor of Th1-, Th2- and Th17-cell differentiation. Induces the formation of stem cells in intestinal crypts in vitro, synergistically activating transcription of target genes, such as SOX9, together with TCF4/beta-catenin. May form a bistable transcriptional switch, controlling expression of its own gene together with Wnt/R-spondin signaling, and thereby maintaining stem cell characteristics. Modulates expression of target genes, including perhaps down-regulating EGR1/Krox24 and chemokine CXCL10/Mob-1 and up-regulating CXCR4 and CDKN1C/p57kip2, in Schwann cells. May play a role in reducing proliferation of Schwann cells, perhaps acting via modulation of expression of CDKN1C. May be dispensable for blastocyst formation and later embryonic function. May be involved in the determination of neuronal precursors. The sequence is that of Achaete-scute homolog 2 (ASCL2) from Bos taurus (Bovine).